Here is a 352-residue protein sequence, read N- to C-terminus: Ion-translocating oxidoreductase complex subunit D (352 aa).

Helical transmembrane passes span 20 to 40, 42 to 62, 89 to 109, and 123 to 143; these read IMLLVLLAAVPGIAAQLWFFG, GTLVQILLASVSALLAEALVL, IPPLAPWWMVVLGTVFAVIIA, and PAMIGYVVLLISFPVQMTSWL. At T187 the chain carries FMN phosphoryl threonine. Transmembrane regions (helical) follow at residues 214–234, 242–262, 267–287, 301–321, and 322–342; these read ILAGAGWQWVNLAWLAGGVWL, WHIPLSFLVTLALCATLGWLF, LAAPQIHLLSGATMLGAFFIL, LIFGALAGLLVWLIRSFGGYP, and DGVAFAVLLANITVPLIDYYT.

The protein belongs to the NqrB/RnfD family. The complex is composed of six subunits: RsxA, RsxB, RsxC, RsxD, RsxE and RsxG. Requires FMN as cofactor.

The protein resides in the cell inner membrane. Its function is as follows. Part of a membrane-bound complex that couples electron transfer with translocation of ions across the membrane. Required to maintain the reduced state of SoxR. This chain is Ion-translocating oxidoreductase complex subunit D, found in Escherichia coli O127:H6 (strain E2348/69 / EPEC).